A 347-amino-acid polypeptide reads, in one-letter code: Protein RecA (347 aa).

67–74 is an ATP binding site; sequence GPESSGKT.

Belongs to the RecA family.

Its subcellular location is the cytoplasm. Can catalyze the hydrolysis of ATP in the presence of single-stranded DNA, the ATP-dependent uptake of single-stranded DNA by duplex DNA, and the ATP-dependent hybridization of homologous single-stranded DNAs. It interacts with LexA causing its activation and leading to its autocatalytic cleavage. The chain is Protein RecA from Helicobacter pylori (strain P12).